Consider the following 70-residue polypeptide: DNA gyrase inhibitor YacG (70 aa).

4 residues coordinate Zn(2+): Cys20, Cys23, Cys35, and Cys39.

The protein belongs to the DNA gyrase inhibitor YacG family. Interacts with GyrB. Requires Zn(2+) as cofactor.

In terms of biological role, inhibits all the catalytic activities of DNA gyrase by preventing its interaction with DNA. Acts by binding directly to the C-terminal domain of GyrB, which probably disrupts DNA binding by the gyrase. The protein is DNA gyrase inhibitor YacG of Rhizobium etli (strain CIAT 652).